The following is a 379-amino-acid chain: Cyclic di-GMP phosphodiesterase PdeB (379 aa).

The region spanning 114 to 310 (FYKKQKKIFI…PLDFIVELND (197 aa)) is the HD-GYP domain.

Mn(2+) serves as cofactor.

It catalyses the reaction 3',3'-c-di-GMP + 2 H2O = 2 GMP + 2 H(+). Phosphodiesterase (PDE) that catalyzes the hydrolysis of cyclic diguanylate (c-di-GMP) to GMP. This is Cyclic di-GMP phosphodiesterase PdeB from Borreliella burgdorferi (strain ATCC 35210 / DSM 4680 / CIP 102532 / B31) (Borrelia burgdorferi).